Reading from the N-terminus, the 132-residue chain is Matrix protein (132 aa).

The protein localises to the virion membrane. Its function is as follows. Envelope protein that may play a role in host-cell attachment and viral genome entry. The sequence is that of Matrix protein from Halorubrum pleomorphic virus 1 (HRPV-1).